The primary structure comprises 127 residues: Fluoride-specific ion channel FluC (127 aa).

4 helical membrane-spanning segments follow: residues 7–27 (LILI…MGLI), 37–57 (FGTL…MAMI), 69–89 (LFMI…SAEV), and 102–122 (LGIM…GVLI). The Na(+) site is built by Gly77 and Thr80.

This sequence belongs to the fluoride channel Fluc/FEX (TC 1.A.43) family.

Its subcellular location is the cell inner membrane. The catalysed reaction is fluoride(in) = fluoride(out). Its activity is regulated as follows. Na(+) is not transported, but it plays an essential structural role and its presence is essential for fluoride channel function. Fluoride-specific ion channel. Important for reducing fluoride concentration in the cell, thus reducing its toxicity. This Mannheimia succiniciproducens (strain KCTC 0769BP / MBEL55E) protein is Fluoride-specific ion channel FluC.